We begin with the raw amino-acid sequence, 899 residues long: Translation initiation factor IF-2 (899 aa).

Disordered regions lie at residues 115–137 (EAKA…LQTE), 170–189 (RGGG…EQKK), and 262–309 (DREI…HGFE). A tr-type G domain is found at 399 to 568 (TRPPVVTIMG…LIQSELMELK (170 aa)). The segment at 408–415 (GHVDHGKT) is G1. 408-415 (GHVDHGKT) is a binding site for GTP. The tract at residues 433 to 437 (GITQH) is G2. Positions 454–457 (DTPG) are G3. Residues 454–458 (DTPGH) and 508–511 (NKMD) contribute to the GTP site. Residues 508–511 (NKMD) are G4. The interval 544 to 546 (SAH) is G5.

It belongs to the TRAFAC class translation factor GTPase superfamily. Classic translation factor GTPase family. IF-2 subfamily.

It is found in the cytoplasm. Its function is as follows. One of the essential components for the initiation of protein synthesis. Protects formylmethionyl-tRNA from spontaneous hydrolysis and promotes its binding to the 30S ribosomal subunits. Also involved in the hydrolysis of GTP during the formation of the 70S ribosomal complex. This chain is Translation initiation factor IF-2, found in Acinetobacter baumannii (strain SDF).